A 428-amino-acid chain; its full sequence is Glutamate-1-semialdehyde 2,1-aminomutase (428 aa).

Lysine 265 carries the post-translational modification N6-(pyridoxal phosphate)lysine.

It belongs to the class-III pyridoxal-phosphate-dependent aminotransferase family. HemL subfamily. As to quaternary structure, homodimer. It depends on pyridoxal 5'-phosphate as a cofactor.

The protein resides in the cytoplasm. The catalysed reaction is (S)-4-amino-5-oxopentanoate = 5-aminolevulinate. It participates in porphyrin-containing compound metabolism; protoporphyrin-IX biosynthesis; 5-aminolevulinate from L-glutamyl-tRNA(Glu): step 2/2. This is Glutamate-1-semialdehyde 2,1-aminomutase from Shewanella woodyi (strain ATCC 51908 / MS32).